The sequence spans 499 residues: Probable cytosol aminopeptidase (499 aa).

Mn(2+) is bound by residues Lys-263 and Asp-268. Residue Lys-275 is part of the active site. Residues Asp-286, Asp-345, and Glu-347 each contribute to the Mn(2+) site. Arg-349 is a catalytic residue.

This sequence belongs to the peptidase M17 family. It depends on Mn(2+) as a cofactor.

It is found in the cytoplasm. It catalyses the reaction Release of an N-terminal amino acid, Xaa-|-Yaa-, in which Xaa is preferably Leu, but may be other amino acids including Pro although not Arg or Lys, and Yaa may be Pro. Amino acid amides and methyl esters are also readily hydrolyzed, but rates on arylamides are exceedingly low.. The enzyme catalyses Release of an N-terminal amino acid, preferentially leucine, but not glutamic or aspartic acids.. Presumably involved in the processing and regular turnover of intracellular proteins. Catalyzes the removal of unsubstituted N-terminal amino acids from various peptides. This Chlamydia caviae (strain ATCC VR-813 / DSM 19441 / 03DC25 / GPIC) (Chlamydophila caviae) protein is Probable cytosol aminopeptidase.